Here is a 200-residue protein sequence, read N- to C-terminus: MTTHRKPSQEQGFLNGQFLLAMPGMSDERFARSVVYICAHSDEGAMGFIINQLQPVQFPDLLRQIGVIGEEDLIILPDRAQHMVVRNGGPVDRTRGFVLHSDDYMVDSTMPVSDDVCLTATVDILRAIYGGGGPERALMALGYSGWAPGQLEMEVAENGWLTCDAPLDMLFDSDIEGKYSRLMLHMGIDMSRLVFDAGHA.

This sequence belongs to the UPF0301 (AlgH) family.

The chain is UPF0301 protein BruAb1_0502 from Brucella abortus biovar 1 (strain 9-941).